The following is a 216-amino-acid chain: Ras-related protein Rab-2B (216 aa).

Residues Gly-16, Val-17, Gly-18, Lys-19, Ser-20, and Cys-21 each contribute to the GDP site. GTP-binding residues include Gly-16, Val-17, Gly-18, Lys-19, Ser-20, Cys-21, and Thr-38. Ser-20 is a binding site for Mg(2+). Positions 37–42 (LTIGVE) match the Switch 1 motif. Residues Thr-38 and Asp-61 each coordinate Mg(2+). Residues 63-72 (AGQESFRSIT) carry the Switch 2 motif. Gly-64, Asn-119, Lys-120, Asp-122, Ala-150, and Lys-151 together coordinate GTP. Asn-119 lines the GDP pocket. 3 residues coordinate GDP: Asp-122, Ala-150, and Lys-151. A disordered region spans residues 189 to 216 (PQQSISTSVGPSASQRNSRDIGSNSGCC). Phosphoserine is present on Ser-202. Residues Cys-215 and Cys-216 are each lipidated (S-geranylgeranyl cysteine).

Belongs to the small GTPase superfamily. Rab family. In terms of assembly, interacts (in GTP-bound form) with GARIN4 (via N-terminus). Interacts (in GTP-bound form) with GARIN5A. Interacts (in GTP-bound form) with GARIN1B. Interacts with VPS39 and VPS41. Mg(2+) is required as a cofactor. As to expression, expressed in kidney, prostate, lung, liver, thymus, colon, pancreas, and skeletal muscle, and low levels in placenta. Not detected in heart, brain, spleen, testis, ovary, small intestine and leukocyte.

It localises to the cell membrane. The protein localises to the endoplasmic reticulum membrane. Its subcellular location is the golgi apparatus membrane. The protein resides in the cytoplasmic vesicle. It is found in the secretory vesicle. It localises to the acrosome. The protein localises to the autophagosome membrane. It catalyses the reaction GTP + H2O = GDP + phosphate + H(+). Its activity is regulated as follows. Regulated by guanine nucleotide exchange factors (GEFs) which promote the exchange of bound GDP for free GTP, GTPase activating proteins (GAPs) which increase the GTP hydrolysis activity, and GDP dissociation inhibitors (GDIs) which inhibit the dissociation of the nucleotide from the GTPase. Functionally, the small GTPases Rab are key regulators of intracellular membrane trafficking, from the formation of transport vesicles to their fusion with membranes. Rabs cycle between active GTP-bound and inactive GDP-bound states. In their active state, drive transport of vesicular carriers from donor organelles to acceptor organelles to regulate the membrane traffic that maintains organelle identity and morphology. Regulates the compacted morphology of the Golgi. Promotes cytosolic DNA-induced innate immune responses. Regulates IFN responses against DNA viruses by regulating the CGAS-STING signaling axis. Together with RAB2A redundantly required for efficient autophagic flux. This Homo sapiens (Human) protein is Ras-related protein Rab-2B.